The following is an 863-amino-acid chain: Dynamin-3 (863 aa).

Residues 28–294 enclose the Dynamin-type G domain; the sequence is LLELPQIAVV…LTNHIRDTLP (267 aa). The G1 motif stretch occupies residues 38-45; the sequence is GGQSAGKS. Position 38–46 (38–46) interacts with GTP; that stretch reads GGQSAGKSS. Residues 64-66 form a G2 motif region; it reads VTR. The segment at 136-139 is G3 motif; that stretch reads DLPG. The G4 motif stretch occupies residues 205 to 208; the sequence is TKLD. 205–211 contributes to the GTP binding site; sequence TKLDLMD. At Y231 the chain carries Phosphotyrosine. Positions 235–238 are G5 motif; that stretch reads VNRS. 236-239 is a binding site for GTP; it reads NRSQ. N6-acetyllysine is present on K299. The PH domain occupies 515–621; the sequence is QVIRKGWLTV…WKASLLRAGV (107 aa). Residue Y593 is modified to Phosphotyrosine. N6-acetyllysine is present on K594. Disordered stretches follow at residues 626–647 and 742–863; these read SVGSNKTENDENGQAENFSMDP and ATVS…SLLD. Residues 627-642 show a composition bias toward polar residues; sequence VGSNKTENDENGQAEN. The 92-residue stretch at 653–744 folds into the GED domain; the sequence is VETIRNLVDS…IIGDINTATV (92 aa). Phosphoserine occurs at positions 763 and 767. Pro residues-rich tracts occupy residues 791 to 816 and 826 to 849; these read PAIPSPGPHSGAPPVPFRPGPLPPFP and PQVPSRPTRAPPSVPSRRPPPSPT. At S847 the chain carries Phosphoserine.

Belongs to the TRAFAC class dynamin-like GTPase superfamily. Dynamin/Fzo/YdjA family.

Its subcellular location is the cytoplasm. It localises to the cytoskeleton. The catalysed reaction is GTP + H2O = GDP + phosphate + H(+). Functionally, microtubule-associated force-producing protein involved in producing microtubule bundles and able to bind and hydrolyze GTP. Most probably involved in vesicular trafficking processes, in particular endocytosis. The polypeptide is Dynamin-3 (Dnm3) (Mus musculus (Mouse)).